The sequence spans 109 residues: Ribonuclease P protein component 2 (109 aa).

This sequence belongs to the eukaryotic/archaeal RNase P protein component 2 family. Consists of a catalytic RNA component and at least 4-5 protein subunits.

Its subcellular location is the cytoplasm. It catalyses the reaction Endonucleolytic cleavage of RNA, removing 5'-extranucleotides from tRNA precursor.. In terms of biological role, part of ribonuclease P, a protein complex that generates mature tRNA molecules by cleaving their 5'-ends. The sequence is that of Ribonuclease P protein component 2 from Archaeoglobus fulgidus (strain ATCC 49558 / DSM 4304 / JCM 9628 / NBRC 100126 / VC-16).